A 239-amino-acid polypeptide reads, in one-letter code: Metallo-beta-lactamase IND-1 (239 aa).

Residues 1 to 20 form the signal peptide; it reads MKKSIRFFIVSILLSPFASA. Zn(2+) contacts are provided by His-96, His-98, Asp-100, His-159, and Cys-178. Lys-181 is a binding site for a beta-lactam. His-220 is a binding site for Zn(2+).

Belongs to the metallo-beta-lactamase superfamily. Class-B beta-lactamase family. As to quaternary structure, monomer. Zn(2+) is required as a cofactor.

It localises to the periplasm. The enzyme catalyses a beta-lactam + H2O = a substituted beta-amino acid. Its activity is regulated as follows. Inhibited by chelating agents such as EDTA. Not susceptible to inactivation by the beta-lactamase-blocking agent clavulanic acid. Functionally, class B beta-lactamase which confers resistance to the beta-lactam antibiotics, including penicillins, cephalosporins and carbapenems. Acts via hydrolysis of the beta-lactam ring. Has penicillin-, cephalosporin- and carbapenem-hydrolyzing activities. This chain is Metallo-beta-lactamase IND-1, found in Chryseobacterium indologenes (Flavobacterium indologenes).